A 485-amino-acid chain; its full sequence is Ulvan lyase (485 aa).

Positions M1 to G33 are cleaved as a signal peptide. Residue C34 is the site of N-palmitoyl cysteine attachment. The S-diacylglycerol cysteine moiety is linked to residue C34. Substrate-binding residues include N64 and N126. The interval F108–G128 is disordered. Residues L115–G128 show a composition bias toward basic and acidic residues. H127 acts as the Proton donor in catalysis. K129 and H147 together coordinate substrate. The active-site Proton acceptor is Y192. 3 residues coordinate substrate: R208, H212, and Y250. H212 lines the Zn(2+) pocket. Residues H268, C270, and H282 each coordinate Zn(2+). A substrate-binding site is contributed by H282.

Belongs to the polysaccharide lyase 25 family.

The protein localises to the cell membrane. In terms of biological role, ulvan lyase involved in ulvan degradation. Ulvan is the main polysaccharide component of the Ulvales (green seaweed) cell wall. It is composed of disaccharide building blocks comprising 3-sulfated rhamnose (Rha3S) linked to D-glucuronic acid (GlcA), L-iduronic acid (IduA), or D-xylose (Xyl). Ulvan lyase catalyzes the endolytic cleavage of the glycosidic bond between Rha3S and the uronic acids GlcA or IduA, producing oligosaccharides that have unsaturated 4-deoxy-L-threo-hex-4-enopyranosiduronic acid (deltaUA) at the non-reducing end. This results eventually in the degradation of the ulvan polysaccharide into deltaUA-Rha3S disaccharides and deltaUA-Rha3S-Xyl-Rha3S tetrasaccharides. In Alteromonas sp. (strain LOR), this protein is Ulvan lyase.